Consider the following 390-residue polypeptide: uncharacterized protein (390 aa).

The next 12 helical transmembrane spans lie at 4-24 (IWLF…LSPL), 40-60 (GWMV…AGPI), 68-88 (TVML…GIAP), 98-118 (FAAG…IPVI), 130-150 (IATA…GFLA), 159-179 (FVLS…MPGI), 205-225 (VILL…SFLG), 236-256 (VSQI…GSLI), 273-293 (GMLL…LFLV), 295-315 (AGFF…MGVF), 329-349 (LSNA…GFLY), and 356-376 (GAVT…YQTI).

This sequence belongs to the major facilitator superfamily.

It is found in the cell membrane. This is an uncharacterized protein from Bacillus subtilis (strain 168).